A 302-amino-acid chain; its full sequence is Small ribosomal subunit biogenesis GTPase RsgA (302 aa).

A CP-type G domain is found at 69–229 (KNLLIRPKVA…VGDTPGFSKV (161 aa)). GTP-binding positions include 118 to 121 (NKID) and 172 to 180 (GPSGVGKSS). Zn(2+) contacts are provided by C252, C257, H259, and C265.

This sequence belongs to the TRAFAC class YlqF/YawG GTPase family. RsgA subfamily. Monomer. Associates with 30S ribosomal subunit, binds 16S rRNA. It depends on Zn(2+) as a cofactor.

The protein resides in the cytoplasm. One of several proteins that assist in the late maturation steps of the functional core of the 30S ribosomal subunit. Helps release RbfA from mature subunits. May play a role in the assembly of ribosomal proteins into the subunit. Circularly permuted GTPase that catalyzes slow GTP hydrolysis, GTPase activity is stimulated by the 30S ribosomal subunit. This chain is Small ribosomal subunit biogenesis GTPase RsgA, found in Aquifex aeolicus (strain VF5).